The sequence spans 357 residues: Protein FAM118A (357 aa).

Met1 bears the N-acetylmethionine mark. A helical membrane pass occupies residues 30 to 50 (LLLVIGTGVSAAVAPGIPALC). Ser311 is modified (phosphoserine).

It belongs to the FAM118 family.

The protein localises to the membrane. The polypeptide is Protein FAM118A (FAM118A) (Homo sapiens (Human)).